Here is a 288-residue protein sequence, read N- to C-terminus: Peroxisomal protein PEX21 (288 aa).

C5 participates in a covalent cross-link: Glycyl cysteine thioester (Cys-Gly) (interchain with G-Cter in ubiquitin).

Belongs to the peroxin-21 family. As to quaternary structure, interacts with PEX7. Interacts with PEX13. Interacts with SES1. Monoubiquitinated at Cys-5; acts as a signal for PEX21 extraction and is required for proper export from peroxisomes and recycling.

The protein localises to the cytoplasm. It localises to the cytosol. It is found in the peroxisome. Its function is as follows. Receptor that mediates peroxisomal import of proteins containing a C-terminal PTS2-type peroxisomal targeting signal via its interaction with PEX7. Interaction with PEX7 only takes place when PEX7 is associated with cargo proteins containing a PTS2 peroxisomal targeting signal. PEX7 along with PTS2-containing cargo proteins are then translocated through the PEX13-PEX14 docking complex together with PEX21. Acts as an activator of the seryl-tRNA synthetase SES1 by increasing its binding to tRNA. The chain is Peroxisomal protein PEX21 (PEX21) from Saccharomyces cerevisiae (strain ATCC 204508 / S288c) (Baker's yeast).